A 229-amino-acid chain; its full sequence is Orotate phosphoribosyltransferase (229 aa).

5-phospho-alpha-D-ribose 1-diphosphate-binding positions include arginine 107, lysine 108, lysine 111, histidine 113, and 133-141 (EDLTTAGGS). Threonine 137 serves as a coordination point for orotate.

The protein belongs to the purine/pyrimidine phosphoribosyltransferase family. PyrE subfamily. Homodimer. Mg(2+) serves as cofactor.

The enzyme catalyses orotidine 5'-phosphate + diphosphate = orotate + 5-phospho-alpha-D-ribose 1-diphosphate. The protein operates within pyrimidine metabolism; UMP biosynthesis via de novo pathway; UMP from orotate: step 1/2. Functionally, catalyzes the transfer of a ribosyl phosphate group from 5-phosphoribose 1-diphosphate to orotate, leading to the formation of orotidine monophosphate (OMP). The sequence is that of Orotate phosphoribosyltransferase from Rhizobium etli (strain CIAT 652).